Reading from the N-terminus, the 353-residue chain is MTIALGKFTKDEKDLFDIMDDWLRRDRFVFVGWSGLLLFPCAYFAVGGWFTGTTFVTSWYTHGLASSYLEGCNFLTAAVSTPANSLAHSLLLLWGPEAQGDFTRWCQLGGLWTFVALHGAFGLIGFMLRQFELARSVQLRPYNAIAFSGPIAVFVSVFLIYPLGQSGWFFAPSFGVAAIFRFILFFQGFHNWTLNPFHMMGVAGVLGAALLCAIHGATVENTLFEDGDGANTFRAFNPTQAEETYSMVTANRFWSQIFGVAFSNKRWLHFFILFVPVTGLWMSALGVVGLALNLRAYDFVSQEIRAAEDPEFETFYTKNILLNEGIRAWMAAQDQPHENLIFPEEVLPRGNAL.

Thr-2 is subject to N-acetylthreonine. At Thr-2 the chain carries Phosphothreonine. Residues 41–61 traverse the membrane as a helical segment; sequence CAYFAVGGWFTGTTFVTSWYT. His-118 provides a ligand contact to chlorophyll a. A helical membrane pass occupies residues 125 to 141; that stretch reads GFMLRQFELARSVQLRP. Residues Gln-130 and Asn-143 each coordinate pheophytin a. A helical transmembrane segment spans residues 153–166; sequence VFVSVFLIYPLGQS. Chlorophyll a is bound at residue His-198. Residues 208-228 traverse the membrane as a helical segment; that stretch reads AALLCAIHGATVENTLFEDGD. A plastoquinone is bound by residues His-215 and Phe-262. Residue His-215 coordinates Fe cation. His-269 provides a ligand contact to Fe cation. Residues 279 to 295 form a helical membrane-spanning segment; the sequence is GLWMSALGVVGLALNLR.

This sequence belongs to the reaction center PufL/M/PsbA/D family. In terms of assembly, PSII is composed of 1 copy each of membrane proteins PsbA, PsbB, PsbC, PsbD, PsbE, PsbF, PsbH, PsbI, PsbJ, PsbK, PsbL, PsbM, PsbT, PsbX, PsbY, PsbZ, Psb30/Ycf12, at least 3 peripheral proteins of the oxygen-evolving complex and a large number of cofactors. It forms dimeric complexes. The D1/D2 heterodimer binds P680, chlorophylls that are the primary electron donor of PSII, and subsequent electron acceptors. It shares a non-heme iron and each subunit binds pheophytin, quinone, additional chlorophylls, carotenoids and lipids. There is also a Cl(-1) ion associated with D1 and D2, which is required for oxygen evolution. The PSII complex binds additional chlorophylls, carotenoids and specific lipids. is required as a cofactor.

The protein resides in the plastid. It is found in the chloroplast thylakoid membrane. The enzyme catalyses 2 a plastoquinone + 4 hnu + 2 H2O = 2 a plastoquinol + O2. Its function is as follows. Photosystem II (PSII) is a light-driven water:plastoquinone oxidoreductase that uses light energy to abstract electrons from H(2)O, generating O(2) and a proton gradient subsequently used for ATP formation. It consists of a core antenna complex that captures photons, and an electron transfer chain that converts photonic excitation into a charge separation. The D1/D2 (PsbA/PsbD) reaction center heterodimer binds P680, the primary electron donor of PSII as well as several subsequent electron acceptors. D2 is needed for assembly of a stable PSII complex. The protein is Photosystem II D2 protein of Guizotia abyssinica (Niger).